The chain runs to 195 residues: Neurturin (195 aa).

Residues 1 to 19 (MRRWKAAALVSLICSSLLS) form the signal peptide. Residues 20 to 95 (VWMCQEGLLL…RAGPRRRRAR (76 aa)) constitute a propeptide that is removed on maturation. Intrachain disulfides connect C101-C163, C128-C192, and C132-C194. 3 residues coordinate heparan sulfate group: R147, R156, and R158.

The protein belongs to the TGF-beta family. GDNF subfamily. In terms of assembly, homodimer; disulfide-linked. Interacts with GFRA2 coreceptor and RET: forms a 2:2:2 ternary complex composed of NRTN ligand, GFRA2 and RET receptor. Also forms a 4:4:4 tetrameric complex composed of 4 copies of NRTN ligand, GFRA2 and RET receptor, which prevents endocytosis of RET. In terms of tissue distribution, widespread distribution.

It is found in the secreted. Growth factor that supports the survival of sympathetic neurons in culture. May regulate the development and maintenance of the CNS. Involved in the development of the neural crest. Might control the size of non-neuronal cell population such as haemopoietic cells. Acts by binding to its coreceptor, GFRA2, leading to autophosphorylation and activation of the RET receptor. Heparan sulfate-binding is required for signaling. This is Neurturin (Nrtn) from Mus musculus (Mouse).